The chain runs to 545 residues: Chaperonin GroEL 3 (545 aa).

Residues 30–33 (TLGP), lysine 51, 87–91 (DGTTT), glycine 415, and aspartate 496 contribute to the ATP site.

It belongs to the chaperonin (HSP60) family. As to quaternary structure, forms a cylinder of 14 subunits composed of two heptameric rings stacked back-to-back. Interacts with the co-chaperonin GroES.

It localises to the cytoplasm. The catalysed reaction is ATP + H2O + a folded polypeptide = ADP + phosphate + an unfolded polypeptide.. Its function is as follows. Together with its co-chaperonin GroES, plays an essential role in assisting protein folding. The GroEL-GroES system forms a nano-cage that allows encapsulation of the non-native substrate proteins and provides a physical environment optimized to promote and accelerate protein folding. The polypeptide is Chaperonin GroEL 3 (Nitrobacter hamburgensis (strain DSM 10229 / NCIMB 13809 / X14)).